A 125-amino-acid chain; its full sequence is Large ribosomal subunit protein bL12 (125 aa).

It belongs to the bacterial ribosomal protein bL12 family. In terms of assembly, homodimer. Part of the ribosomal stalk of the 50S ribosomal subunit. Forms a multimeric L10(L12)X complex, where L10 forms an elongated spine to which 2 to 4 L12 dimers bind in a sequential fashion. Binds GTP-bound translation factors.

Functionally, forms part of the ribosomal stalk which helps the ribosome interact with GTP-bound translation factors. Is thus essential for accurate translation. This is Large ribosomal subunit protein bL12 from Afipia carboxidovorans (strain ATCC 49405 / DSM 1227 / KCTC 32145 / OM5) (Oligotropha carboxidovorans).